Consider the following 153-residue polypeptide: Aspartate carbamoyltransferase regulatory chain (153 aa).

Zn(2+) contacts are provided by Cys110, Cys115, Cys138, and Cys141.

This sequence belongs to the PyrI family. In terms of assembly, contains catalytic and regulatory chains. It depends on Zn(2+) as a cofactor.

Involved in allosteric regulation of aspartate carbamoyltransferase. This chain is Aspartate carbamoyltransferase regulatory chain, found in Bacteroides thetaiotaomicron (strain ATCC 29148 / DSM 2079 / JCM 5827 / CCUG 10774 / NCTC 10582 / VPI-5482 / E50).